We begin with the raw amino-acid sequence, 305 residues long: UPF0450 protein C17orf58 homolog (305 aa).

The signal sequence occupies residues 1 to 22; the sequence is MTARALWLLCLIVGWSPEAPVA. The disordered stretch occupies residues 18–160; sequence EAPVAERKAP…DREPETQSCA (143 aa). The span at 21–39 shows a compositional bias: basic and acidic residues; the sequence is VAERKAPPPHRKPDSRETP. Disulfide bonds link Cys-159/Cys-233, Cys-163/Cys-237, and Cys-174/Cys-304. Positions 159 to 304 constitute an NTR domain; it reads CARACSADAD…QVRGATHTQC (146 aa).

Belongs to the UPF0450 family.

This chain is UPF0450 protein C17orf58 homolog, found in Mus musculus (Mouse).